We begin with the raw amino-acid sequence, 98 residues long: Cystatin-B (98 aa).

A Cystatin domain is found at 4-83; that stretch reads GGTSQPVDAD…PCNGETLELS (80 aa). Residues 46–50 carry the Secondary area of contact motif; sequence QCVPG.

Belongs to the cystatin family. Ubiquitously expressed in normal and lipopolysaccharide (LPS)-stimulated tissues including brain, eye, gullet, heart, liver, muscle, stomach, kidney, spleen, pyloric ceca, intestine and gill.

Its subcellular location is the cytoplasm. Its activity is regulated as follows. Greatly decreased inhibitory activity against papain protease by metal ions including ZnSO(4), CuSO(4), HgCl(2) and CoCl(2). Decreased inhibitory activity against papain protease by detergents including Tween 20, SDS and Brij 35. Thiol protease inhibitor. Has high papain, bovine cathepsin B and fish cathepsins F and X inhibitory activity and inhibits fish cathepsins L, S and K to a lesser extent in vitro. May be involved in innate immunity. The chain is Cystatin-B from Paralichthys olivaceus (Bastard halibut).